Here is a 256-residue protein sequence, read N- to C-terminus: Non-structural protein 1 (256 aa).

The protein resides in the host cytoplasm. It is found in the host perinuclear region. In terms of biological role, plays a role in inhibition of the host innate immune system by counteracting the type I interferon signaling. The chain is Non-structural protein 1 from Infectious salmon anemia virus (isolate Atlantic salmon/Norway/810/9/99) (ISAV).